The primary structure comprises 468 residues: Siroheme synthase 1 (468 aa).

The precorrin-2 dehydrogenase /sirohydrochlorin ferrochelatase stretch occupies residues 1-204; that stretch reads MDYLPIFCRL…GDKASANQLA (204 aa). NAD(+) contacts are provided by residues 22–23 and 43–44; these read EV and PA. A Phosphoserine modification is found at S128. A uroporphyrinogen-III C-methyltransferase region spans residues 216–468; it reads GEVILVGAGP…NHGVQAAALA (253 aa). An S-adenosyl-L-methionine-binding site is contributed by P225. The active-site Proton acceptor is D248. K270 (proton donor) is an active-site residue. S-adenosyl-L-methionine-binding positions include 301–303, I306, 331–332, M383, and G412; these read GGD and TA.

It in the N-terminal section; belongs to the precorrin-2 dehydrogenase / sirohydrochlorin ferrochelatase family. This sequence in the C-terminal section; belongs to the precorrin methyltransferase family.

It catalyses the reaction uroporphyrinogen III + 2 S-adenosyl-L-methionine = precorrin-2 + 2 S-adenosyl-L-homocysteine + H(+). The catalysed reaction is precorrin-2 + NAD(+) = sirohydrochlorin + NADH + 2 H(+). It carries out the reaction siroheme + 2 H(+) = sirohydrochlorin + Fe(2+). It participates in cofactor biosynthesis; adenosylcobalamin biosynthesis; precorrin-2 from uroporphyrinogen III: step 1/1. The protein operates within cofactor biosynthesis; adenosylcobalamin biosynthesis; sirohydrochlorin from precorrin-2: step 1/1. It functions in the pathway porphyrin-containing compound metabolism; siroheme biosynthesis; precorrin-2 from uroporphyrinogen III: step 1/1. Its pathway is porphyrin-containing compound metabolism; siroheme biosynthesis; siroheme from sirohydrochlorin: step 1/1. It participates in porphyrin-containing compound metabolism; siroheme biosynthesis; sirohydrochlorin from precorrin-2: step 1/1. Its function is as follows. Multifunctional enzyme that catalyzes the SAM-dependent methylations of uroporphyrinogen III at position C-2 and C-7 to form precorrin-2 via precorrin-1. Then it catalyzes the NAD-dependent ring dehydrogenation of precorrin-2 to yield sirohydrochlorin. Finally, it catalyzes the ferrochelation of sirohydrochlorin to yield siroheme. The chain is Siroheme synthase 1 from Aeromonas salmonicida (strain A449).